A 334-amino-acid chain; its full sequence is Malate dehydrogenase, cytoplasmic (334 aa).

An N-acetylserine modification is found at Ser-2. NAD(+) contacts are provided by residues 11-17 (GAAGQIA) and Asp-42. The substrate site is built by Arg-92 and Arg-98. Asn-105 lines the NAD(+) pocket. N6-succinyllysine is present on Lys-110. An NAD(+)-binding site is contributed by Gln-112. N6-acetyllysine occurs at positions 118 and 121. Residue 129-131 (VGN) participates in NAD(+) binding. Residues Asn-131 and Arg-162 each coordinate substrate. Residue His-187 is the Proton acceptor of the active site. Lys-214 is subject to N6-succinyllysine. Phosphoserine is present on Ser-217. Arg-230 carries the omega-N-methylarginine modification. Ser-241 is modified (phosphoserine). Lys-298 is modified (N6-acetyllysine; alternate). The residue at position 298 (Lys-298) is an N6-succinyllysine; alternate. A Phosphoserine modification is found at Ser-309. Residue Lys-318 is modified to N6-succinyllysine. Ser-333 is modified (phosphoserine).

The protein belongs to the LDH/MDH superfamily. MDH type 2 family. As to quaternary structure, homodimer. Post-translationally, ISGylated. Acetylation at Lys-118 dramatically enhances enzymatic activity and promotes adipogenic differentiation.

It is found in the cytoplasm. The protein localises to the cytosol. It carries out the reaction (S)-malate + NAD(+) = oxaloacetate + NADH + H(+). It catalyses the reaction (2R)-2-hydroxy-3-(4-hydroxyphenyl)propanoate + NAD(+) = 3-(4-hydroxyphenyl)pyruvate + NADH + H(+). The catalysed reaction is (S)-2-hydroxyglutarate + NAD(+) = 2-oxoglutarate + NADH + H(+). In terms of biological role, catalyzes the reduction of aromatic alpha-keto acids in the presence of NADH. Plays essential roles in the malate-aspartate shuttle and the tricarboxylic acid cycle, important in mitochondrial NADH supply for oxidative phosphorylation. Catalyzes the reduction of 2-oxoglutarate to 2-hydroxyglutarate, leading to elevated reactive oxygen species (ROS). This chain is Malate dehydrogenase, cytoplasmic (MDH1), found in Bos taurus (Bovine).